Consider the following 53-residue polypeptide: ATP synthase F(0) complex subunit 8 (53 aa).

A helical membrane pass occupies residues 8-24; sequence PWLTTFLIVWISLIVIL.

The protein belongs to the ATPase protein 8 family. As to quaternary structure, component of the ATP synthase complex composed at least of ATP5F1A/subunit alpha, ATP5F1B/subunit beta, ATP5MC1/subunit c (homooctomer), MT-ATP6/subunit a, MT-ATP8/subunit 8, ATP5ME/subunit e, ATP5MF/subunit f, ATP5MG/subunit g, ATP5MK/subunit k, ATP5MJ/subunit j, ATP5F1C/subunit gamma, ATP5F1D/subunit delta, ATP5F1E/subunit epsilon, ATP5PF/subunit F6, ATP5PB/subunit b, ATP5PD/subunit d, ATP5PO/subunit OSCP. ATP synthase complex consists of a soluble F(1) head domain (subunits alpha(3) and beta(3)) - the catalytic core - and a membrane F(0) domain - the membrane proton channel (subunits c, a, 8, e, f, g, k and j). These two domains are linked by a central stalk (subunits gamma, delta, and epsilon) rotating inside the F1 region and a stationary peripheral stalk (subunits F6, b, d, and OSCP).

The protein localises to the mitochondrion membrane. Functionally, subunit 8, of the mitochondrial membrane ATP synthase complex (F(1)F(0) ATP synthase or Complex V) that produces ATP from ADP in the presence of a proton gradient across the membrane which is generated by electron transport complexes of the respiratory chain. ATP synthase complex consist of a soluble F(1) head domain - the catalytic core - and a membrane F(1) domain - the membrane proton channel. These two domains are linked by a central stalk rotating inside the F(1) region and a stationary peripheral stalk. During catalysis, ATP synthesis in the catalytic domain of F(1) is coupled via a rotary mechanism of the central stalk subunits to proton translocation. In vivo, can only synthesize ATP although its ATP hydrolase activity can be activated artificially in vitro. Part of the complex F(0) domain. This chain is ATP synthase F(0) complex subunit 8, found in Alligator mississippiensis (American alligator).